Consider the following 364-residue polypeptide: Alanine racemase (364 aa).

The active-site Proton acceptor; specific for D-alanine is Lys35. The residue at position 35 (Lys35) is an N6-(pyridoxal phosphate)lysine. Residue Arg136 participates in substrate binding. Tyr261 acts as the Proton acceptor; specific for L-alanine in catalysis. Residue Met309 coordinates substrate.

It belongs to the alanine racemase family. Pyridoxal 5'-phosphate serves as cofactor.

It catalyses the reaction L-alanine = D-alanine. It functions in the pathway amino-acid biosynthesis; D-alanine biosynthesis; D-alanine from L-alanine: step 1/1. Functionally, catalyzes the interconversion of L-alanine and D-alanine. May also act on other amino acids. This is Alanine racemase (alr) from Shewanella amazonensis (strain ATCC BAA-1098 / SB2B).